The following is a 520-amino-acid chain: Peptide chain release factor 3 (520 aa).

The tr-type G domain maps to 8-277 (ESRKTFAIIS…FAPMPNARQT (270 aa)). Residues 17 to 24 (SHPDAGKT), 85 to 89 (DTPGH), and 139 to 142 (NKLD) each bind GTP.

It belongs to the TRAFAC class translation factor GTPase superfamily. Classic translation factor GTPase family. PrfC subfamily.

It localises to the cytoplasm. Its function is as follows. Increases the formation of ribosomal termination complexes and stimulates activities of RF-1 and RF-2. It binds guanine nucleotides and has strong preference for UGA stop codons. It may interact directly with the ribosome. The stimulation of RF-1 and RF-2 is significantly reduced by GTP and GDP, but not by GMP. The polypeptide is Peptide chain release factor 3 (Staphylococcus aureus (strain JH1)).